A 436-amino-acid chain; its full sequence is Hydrogenobyrinate a,c-diamide synthase (436 aa).

One can recognise a GATase cobBQ-type domain in the interval 244–435; it reads RIAVARDDAF…MHVIDFSGEA (192 aa). C327 acts as the Nucleophile in catalysis.

It belongs to the CobB/CbiA family. It depends on Mg(2+) as a cofactor.

The enzyme catalyses hydrogenobyrinate + 2 L-glutamine + 2 ATP + 2 H2O = hydrogenobyrinate a,c-diamide + 2 L-glutamate + 2 ADP + 2 phosphate + 2 H(+). It participates in cofactor biosynthesis; adenosylcobalamin biosynthesis; cob(II)yrinate a,c-diamide from precorrin-2 (aerobic route): step 9/10. In terms of biological role, catalyzes the ATP-dependent amidation of the two carboxylate groups at positions a and c of hydrogenobyrinate, using either L-glutamine or ammonia as the nitrogen source. This chain is Hydrogenobyrinate a,c-diamide synthase, found in Brucella abortus biovar 1 (strain 9-941).